Consider the following 280-residue polypeptide: Cycloeucalenol cycloisomerase (280 aa).

Transmembrane regions (helical) follow at residues 22–42 (LFFL…VVPY), 53–73 (YLLL…LLVG), 89–109 (ANLW…HYFF), 167–187 (FEAA…TIAI), 201–221 (MYRV…PMFF), and 244–264 (AMLV…IVPL).

Its subcellular location is the membrane. It catalyses the reaction cycloeucalenol = obtusifoliol. Its function is as follows. Converts pentacyclic cyclopropyl sterols to tetracyclic sterols. The sequence is that of Cycloeucalenol cycloisomerase (CPI1) from Arabidopsis thaliana (Mouse-ear cress).